The following is an 847-amino-acid chain: Nitrite reductase (NADH) large subunit (847 aa).

44-79 lines the FAD pocket; sequence YDRVHLSSYFSHHTAEELSLVREGFYEKHGIKVLVG. 193 to 225 contributes to the NAD(+) binding site; the sequence is LRRKIESMGVRVHTSKNTLEIVQEGVEARKTMR. [2Fe-2S] cluster is bound by residues Cys425, Cys427, Cys459, and Cys462. [4Fe-4S] cluster is bound by residues Cys641, Cys647, Cys681, and Cys685. Cys685 serves as a coordination point for siroheme.

This sequence belongs to the nitrite and sulfite reductase 4Fe-4S domain family. As to quaternary structure, homodimer which associates with NirD. The cofactor is siroheme. [2Fe-2S] cluster is required as a cofactor. It depends on [4Fe-4S] cluster as a cofactor. FAD serves as cofactor.

It carries out the reaction NH4(+) + 3 NAD(+) + 2 H2O = nitrite + 3 NADH + 5 H(+). It participates in nitrogen metabolism; nitrate reduction (assimilation). This is Nitrite reductase (NADH) large subunit (nirB) from Escherichia coli (strain K12).